Here is a 222-residue protein sequence, read N- to C-terminus: Sigma non-opioid intracellular receptor 1 (222 aa).

The Lumenal portion of the chain corresponds to 1 to 6; it reads MSLIRT. Residues 7-29 form a helical membrane-spanning segment; sequence ILKLVVVVGFLSLTVQFIRHWMA. Topologically, residues 30-222 are cytoplasmic; that stretch reads NKQYVFTKEE…STFLTESGVL (193 aa). The segment at 97–104 is important for ligand-binding; that stretch reads SLTEYVLL. Residues 175–222 are C-terminal hydrophobic region; it reads FIPSTLGFALADTMFSTQDFLTLFYTARVYVKGMILEASTFLTESGVL.

It belongs to the ERG2 family. As to quaternary structure, homotrimer.

The protein localises to the nucleus inner membrane. It localises to the nucleus outer membrane. Its subcellular location is the nucleus envelope. The protein resides in the cytoplasmic vesicle. It is found in the endoplasmic reticulum membrane. The protein localises to the membrane. Its function is as follows. May function in lipid transport from the endoplasmic reticulum and be involved in a wide array of cellular functions probably through regulation of the biogenesis of lipid microdomains at the plasma membrane. May regulate calcium efflux at the endoplasmic reticulum. The protein is Sigma non-opioid intracellular receptor 1 (sigmar1) of Danio rerio (Zebrafish).